We begin with the raw amino-acid sequence, 366 residues long: MTKQKLLLNGTFSLILIVACEAQQLPRSHAASSSGPLCEKEAESWGNLLSSERLDAWICSLIGSFMVGLSGIFPLLVIPFETGAALRSEAGSRRLKQLLSFAIGGLLGNVFLHLLPEAWAYTCSAAAGEGQSFQQQKLLGLWVIIGFLTFLALEKIFLEKEEEECPGVGCDYKAPLGKIPNGSGYPPSKVAGKSQRAEKNSTQCNGSSLQSCRTDNRIKISGYLNLLANTIDNFTHGLAVAASFLVSRKVGFLTTMAILLHEIPHEVGDFAILLRAGFDRWSAAKMQLSTALGGIVGACFAICAQSPKGAGETVAWILPFTSGGFLYIALVNVVPDLLEEKNPWNSLQQILLLCTGITVMVLLAHN.

At 1-5 (MTKQK) the chain is on the lumenal side. A helical membrane pass occupies residues 6–26 (LLLNGTFSLILIVACEAQQLP). At 27–57 (RSHAASSSGPLCEKEAESWGNLLSSERLDAW) the chain is on the cytoplasmic side. A helical transmembrane segment spans residues 58-78 (ICSLIGSFMVGLSGIFPLLVI). Residues 79–97 (PFETGAALRSEAGSRRLKQ) are Lumenal-facing. The chain crosses the membrane as a helical span at residues 98 to 118 (LLSFAIGGLLGNVFLHLLPEA). The Cytoplasmic segment spans residues 119–137 (WAYTCSAAAGEGQSFQQQK). Residues 138 to 158 (LLGLWVIIGFLTFLALEKIFL) traverse the membrane as a helical segment. Residues 159–225 (EKEEEECPGV…NRIKISGYLN (67 aa)) lie on the Lumenal side of the membrane. The disordered stretch occupies residues 183–205 (SGYPPSKVAGKSQRAEKNSTQCN). A helical membrane pass occupies residues 226 to 246 (LLANTIDNFTHGLAVAASFLV). The Cytoplasmic segment spans residues 247-282 (SRKVGFLTTMAILLHEIPHEVGDFAILLRAGFDRWS). The short motif at 261 to 266 (HEIPHE) is the XEXPHE-motif element. Residues 283-303 (AAKMQLSTALGGIVGACFAIC) form a helical membrane-spanning segment. The Lumenal portion of the chain corresponds to 304–313 (AQSPKGAGET). A helical transmembrane segment spans residues 314 to 334 (VAWILPFTSGGFLYIALVNVV). Over 335 to 343 (PDLLEEKNP) the chain is Cytoplasmic. Residues 344 to 364 (WNSLQQILLLCTGITVMVLLA) traverse the membrane as a helical segment. The Lumenal segment spans residues 365-366 (HN).

Belongs to the ZIP transporter (TC 2.A.5) family. As to quaternary structure, homodimer.

Its subcellular location is the golgi apparatus membrane. It is found in the cytoplasmic vesicle membrane. The protein localises to the endoplasmic reticulum membrane. The catalysed reaction is Zn(2+)(in) = Zn(2+)(out). Its function is as follows. Functions as a zinc transporter transporting Zn(2+) from the Golgi apparatus to the cytosol and thus influences the zinc level at least in areas of the cytosol. The chain is Zinc transporter ZIP13 from Gallus gallus (Chicken).